The chain runs to 312 residues: Carbonic anhydrase 4 (312 aa).

Residues 1–18 (MRLLLALLVLAAAPPQAR) form the signal peptide. In terms of domain architecture, Alpha-carbonic anhydrase spans 21 to 285 (SHWCYQIQVK…LGQRQVFRSG (265 aa)). 2 disulfide bridges follow: Cys-24–Cys-36 and Cys-46–Cys-229. Asn-33 is a glycosylation site (N-linked (GlcNAc...) asparagine). The active-site Proton donor/acceptor is His-88. Positions 115, 117, and 140 each coordinate Zn(2+). N-linked (GlcNAc...) asparagine glycans are attached at residues Asn-152 and Asn-195. 225 to 226 (TT) is a binding site for substrate. Residue Asn-265 is glycosylated (N-linked (GlcNAc...) asparagine). Ser-284 carries GPI-anchor amidated serine lipidation. The propeptide at 285 to 312 (GAPGLLLAQPLPTLLAPVLACLTVGFLR) is removed in mature form.

It belongs to the alpha-carbonic anhydrase family. Interacts with SLC4A4. Zn(2+) is required as a cofactor.

It is found in the cell membrane. The enzyme catalyses hydrogencarbonate + H(+) = CO2 + H2O. Inhibited by acetazolamide. Catalyzes the reversible hydration of carbon dioxide into bicarbonate and protons and thus is essential to maintaining intracellular and extracellular pH. May stimulate the sodium/bicarbonate transporter activity of SLC4A4 that acts in pH homeostasis. It is essential for acid overload removal from the retina and retina epithelium, and acid release in the choriocapillaris in the choroid. This chain is Carbonic anhydrase 4 (CA4), found in Bos taurus (Bovine).